A 234-amino-acid polypeptide reads, in one-letter code: Inosine triphosphate pyrophosphatase (234 aa).

11-16 provides a ligand contact to ITP; sequence SGNKGK. E40 contacts Mg(2+). Residues K53, 81–82, K98, 176–179, K203, and 208–209 each bind ITP; these read DT, FGWD, and HR.

The protein belongs to the HAM1 NTPase family. In terms of assembly, homodimer. Mg(2+) serves as cofactor. It depends on Mn(2+) as a cofactor.

The protein resides in the cytoplasm. The catalysed reaction is ITP + H2O = IMP + diphosphate + H(+). It carries out the reaction dITP + H2O = dIMP + diphosphate + H(+). It catalyses the reaction XTP + H2O = XMP + diphosphate + H(+). Its function is as follows. Pyrophosphatase that hydrolyzes non-canonical purine nucleotides such as inosine triphosphate (ITP), deoxyinosine triphosphate (dITP) or xanthosine 5'-triphosphate (XTP) to their respective monophosphate derivatives. The enzyme does not distinguish between the deoxy- and ribose forms. Probably excludes non-canonical purines from RNA and DNA precursor pools, thus preventing their incorporation into RNA and DNA and avoiding chromosomal lesions. The polypeptide is Inosine triphosphate pyrophosphatase (Leishmania major).